We begin with the raw amino-acid sequence, 565 residues long: Ubiquitin carboxyl-terminal hydrolase 39 (565 aa).

2 stretches are compositionally biased toward basic and acidic residues: residues 1–21 and 28–39; these read MSGRSKRESRGSTRGKRESES and VKRERDREREPE. 2 disordered regions span residues 1-61 and 75-96; these read MSGR…SARE and EREVDEDSEPEREVRAKNGRVD. Phosphoserine is present on Ser46. Residue Lys51 forms a Glycyl lysine isopeptide (Lys-Gly) (interchain with G-Cter in SUMO2) linkage. Ser82 bears the Phosphoserine mark. Residues 85–96 are compositionally biased toward basic and acidic residues; it reads EREVRAKNGRVD. A UBP-type; degenerate zinc finger spans residues 103–200; sequence RHCPYLDTIN…YVLKPTFTKQ (98 aa). The Zn(2+) site is built by Cys136, Cys139, His155, and His161. The region spanning 225–555 is the USP domain; it reads VGLNNIKAND…EAYIQIWKRR (331 aa).

Belongs to the peptidase C19 family. The U4/U6-U5 tri-snRNP complex is a building block of the precatalytic spliceosome (spliceosome B complex). Component of the U4/U6-U5 tri-snRNP complex composed of the U4, U6 and U5 snRNAs and at least PRPF3, PRPF4, PRPF6, PRPF8, PRPF31, SNRNP200, TXNL4A, SNRNP40, SNRPB, SNRPD1, SNRPD2, SNRPD3, SNRPE, SNRPF, SNRPG, DDX23, CD2BP2, PPIH, SNU13, EFTUD2, SART1 and USP39, plus LSM2, LSM3, LSM4, LSM5, LSM6, LSM7 and LSM8.

Its subcellular location is the nucleus. The catalysed reaction is Thiol-dependent hydrolysis of ester, thioester, amide, peptide and isopeptide bonds formed by the C-terminal Gly of ubiquitin (a 76-residue protein attached to proteins as an intracellular targeting signal).. Deubiquitinating enzyme that plays a role in many cellular processes including cellular antiviral response, epithelial morphogenesis, DNA repair or B-cell development. Plays a role in pre-mRNA splicing as a component of the U4/U6-U5 tri-snRNP, one of the building blocks of the precatalytic spliceosome. Specifically regulates immunoglobulin gene rearrangement in a spliceosome-dependent manner, which involves modulating chromatin interactions at the Igh locus and therefore plays an essential role in B-cell development. Regulates AURKB mRNA levels, and thereby plays a role in cytokinesis and in the spindle checkpoint. Regulates apoptosis and G2/M cell cycle checkpoint in response to DNA damage by deubiquitinating and stabilizing CHK2. Also plays an important role in DNA repair by controlling the recruitment of XRCC4/LIG4 to DNA double-strand breaks for non-homologous end-joining repair. Participates in antiviral activity by affecting the type I IFN signaling by stabilizing STAT1 and decreasing its 'Lys-6'-linked ubiquitination. Contributes to non-canonical Wnt signaling during epidermal differentiation. Acts as a negative regulator NF-kappa-B activation through deubiquitination of 'Lys-48'-linked ubiquitination of NFKBIA. The chain is Ubiquitin carboxyl-terminal hydrolase 39 (USP39) from Pongo abelii (Sumatran orangutan).